The sequence spans 901 residues: HTH-type transcriptional regulator MalT (901 aa).

An ATP-binding site is contributed by 39-46 (SPAGYGKT). Positions 829-894 (ELIRTSPLTQ…AAVQHAQKLL (66 aa)) constitute an HTH luxR-type domain. Positions 853-872 (NEQIAGELEVAATTIKTHIR) form a DNA-binding region, H-T-H motif.

This sequence belongs to the MalT family. Monomer in solution. Oligomerizes to an active state in the presence of the positive effectors ATP and maltotriose.

With respect to regulation, activated by ATP and maltotriose, which are both required for DNA binding. Positively regulates the transcription of the maltose regulon whose gene products are responsible for uptake and catabolism of malto-oligosaccharides. Specifically binds to the promoter region of its target genes, recognizing a short DNA motif called the MalT box. This is HTH-type transcriptional regulator MalT from Shigella boydii serotype 4 (strain Sb227).